The sequence spans 463 residues: ATP-dependent protease ATPase subunit HslU (463 aa).

Residues Ile-19, 61–66 (GVGKTE), Asp-277, Glu-341, and Arg-413 each bind ATP.

Belongs to the ClpX chaperone family. HslU subfamily. In terms of assembly, a double ring-shaped homohexamer of HslV is capped on each side by a ring-shaped HslU homohexamer. The assembly of the HslU/HslV complex is dependent on binding of ATP.

The protein localises to the cytoplasm. ATPase subunit of a proteasome-like degradation complex; this subunit has chaperone activity. The binding of ATP and its subsequent hydrolysis by HslU are essential for unfolding of protein substrates subsequently hydrolyzed by HslV. HslU recognizes the N-terminal part of its protein substrates and unfolds these before they are guided to HslV for hydrolysis. The polypeptide is ATP-dependent protease ATPase subunit HslU (Bacillus anthracis (strain A0248)).